The following is a 221-amino-acid chain: Casparian strip membrane protein 3 (221 aa).

A compositionally biased stretch (basic and acidic residues) spans 1–12; that stretch reads MDIEKAASRREE. The disordered stretch occupies residues 1–28; sequence MDIEKAASRREEEEPIVQRPKLDKGKGK. Topologically, residues 1 to 58 are cytoplasmic; the sequence is MDIEKAASRREEEEPIVQRPKLDKGKGKAHVFAPPMNYNRIMDKHKQEKVSAAGWKRG. The chain crosses the membrane as a helical span at residues 59–79; sequence VAIFDFVLRLIAAITAMAAAA. Residues 80–109 are Extracellular-facing; it reads KMATTEETLPFFTQFLQFQAEYTDLPTMSS. A helical membrane pass occupies residues 110–130; it reads FVIVNSIVGGYLTLSLPFSIV. At 131 to 148 the chain is on the cytoplasmic side; it reads CILRPLAVPPRLFLIICD. The helical transmembrane segment at 149–169 threads the bilayer; it reads TAMMGLTMMAASASAAIVYLA. Over 170–194 the chain is Extracellular; it reads HNGNSSSNWLPVCQQFGDFCQGTSG. Residue Asn-173 is glycosylated (N-linked (GlcNAc...) asparagine). Residues 195–215 traverse the membrane as a helical segment; the sequence is AVVASFIAATLLMFLVILSAF. Over 216-221 the chain is Cytoplasmic; it reads ALKRST.

This sequence belongs to the Casparian strip membrane proteins (CASP) family. Homodimer and heterodimers.

It localises to the cell membrane. Regulates membrane-cell wall junctions and localized cell wall deposition. Required for establishment of the Casparian strip membrane domain (CSD) and the subsequent formation of Casparian strips, a cell wall modification of the root endodermis that determines an apoplastic barrier between the intraorganismal apoplasm and the extraorganismal apoplasm and prevents lateral diffusion. The sequence is that of Casparian strip membrane protein 3 from Arabidopsis lyrata subsp. lyrata (Lyre-leaved rock-cress).